Here is a 513-residue protein sequence, read N- to C-terminus: Histidine ammonia-lyase (513 aa).

A cross-link (5-imidazolinone (Ala-Gly)) is located at residues A144 to G146. S145 is modified (2,3-didehydroalanine (Ser)).

Belongs to the PAL/histidase family. Post-translationally, contains an active site 4-methylidene-imidazol-5-one (MIO), which is formed autocatalytically by cyclization and dehydration of residues Ala-Ser-Gly.

The protein resides in the cytoplasm. It catalyses the reaction L-histidine = trans-urocanate + NH4(+). It functions in the pathway amino-acid degradation; L-histidine degradation into L-glutamate; N-formimidoyl-L-glutamate from L-histidine: step 1/3. This Streptococcus gordonii (strain Challis / ATCC 35105 / BCRC 15272 / CH1 / DL1 / V288) protein is Histidine ammonia-lyase.